Reading from the N-terminus, the 148-residue chain is uncharacterized protein (148 aa).

The first 18 residues, 1-18, serve as a signal peptide directing secretion; that stretch reads MKIILTVLAGVGLLSAGG. A lipid anchor (N-palmitoyl cysteine) is attached at C19. C19 is lipidated: S-diacylglycerol cysteine.

It localises to the cell membrane. This is an uncharacterized protein from Bacillus subtilis (strain 168).